The sequence spans 404 residues: Cysteine desulfurase IscS (404 aa).

Residues 75–76, Asn-155, Gln-183, and 203–205 each bind pyridoxal 5'-phosphate; these read AT and SGH. Lys-206 bears the N6-(pyridoxal phosphate)lysine mark. Residue Thr-243 participates in pyridoxal 5'-phosphate binding. Catalysis depends on Cys-328, which acts as the Cysteine persulfide intermediate. Position 328 (Cys-328) interacts with [2Fe-2S] cluster.

It belongs to the class-V pyridoxal-phosphate-dependent aminotransferase family. NifS/IscS subfamily. In terms of assembly, homodimer. Forms a heterotetramer with IscU, interacts with other sulfur acceptors. The cofactor is pyridoxal 5'-phosphate.

It is found in the cytoplasm. The enzyme catalyses (sulfur carrier)-H + L-cysteine = (sulfur carrier)-SH + L-alanine. It functions in the pathway cofactor biosynthesis; iron-sulfur cluster biosynthesis. Functionally, master enzyme that delivers sulfur to a number of partners involved in Fe-S cluster assembly, tRNA modification or cofactor biosynthesis. Catalyzes the removal of elemental sulfur atoms from cysteine to produce alanine. Functions as a sulfur delivery protein for Fe-S cluster synthesis onto IscU, an Fe-S scaffold assembly protein, as well as other S acceptor proteins. The chain is Cysteine desulfurase IscS from Pectobacterium carotovorum subsp. carotovorum (strain PC1).